Here is a 100-residue protein sequence, read N- to C-terminus: NADH-quinone oxidoreductase subunit K (100 aa).

3 helical membrane passes run L4–V24, I28–V48, and I60–L80.

Belongs to the complex I subunit 4L family. NDH-1 is composed of 13 different subunits. Subunits NuoA, H, J, K, L, M, N constitute the membrane sector of the complex.

It is found in the cell membrane. The enzyme catalyses a quinone + NADH + 5 H(+)(in) = a quinol + NAD(+) + 4 H(+)(out). Its function is as follows. NDH-1 shuttles electrons from NADH, via FMN and iron-sulfur (Fe-S) centers, to quinones in the respiratory chain. The immediate electron acceptor for the enzyme in this species is believed to be ubiquinone. Couples the redox reaction to proton translocation (for every two electrons transferred, four hydrogen ions are translocated across the cytoplasmic membrane), and thus conserves the redox energy in a proton gradient. The sequence is that of NADH-quinone oxidoreductase subunit K from Buchnera aphidicola subsp. Schizaphis graminum (strain Sg).